The primary structure comprises 443 residues: GPI mannosyltransferase 1 (443 aa).

Transmembrane regions (helical) follow at residues 8–28, 68–88, 90–110, 136–156, 160–180, 232–252, 273–291, 302–322, 347–367, 374–394, and 406–426; these read PFMVYGLAAGLRTVLLFYGAW, PLLAWMLLPTTWAIPGFFSFG, ALFALSDVVAGWLVAKSLTLT, TRGSSEGLLGVLVVALLWAVL, IYLGGVLLGIGVHFKIYPFIY, LTLISLLTFVALNAAMYLHYG, FSPYSTLLYLTAASSAGAV, FESLAFIPQLLISVVVIPLVL, SQYFLWYLIFLPFYLPTSSLL, IAVAALWILGQALWLQQGYLL, and LFLASLGFFAVNAWILGVIVA.

The protein belongs to the PIGM family.

The protein resides in the endoplasmic reticulum membrane. The protein operates within glycolipid biosynthesis; glycosylphosphatidylinositol-anchor biosynthesis. In terms of biological role, mannosyltransferase involved in glycosylphosphatidylinositol-anchor biosynthesis. Transfers the first alpha-1,4-mannose to GlcN-acyl-PI during GPI precursor assembly. Required for cell wall integrity. The sequence is that of GPI mannosyltransferase 1 (gpi14) from Emericella nidulans (strain FGSC A4 / ATCC 38163 / CBS 112.46 / NRRL 194 / M139) (Aspergillus nidulans).